Here is a 387-residue protein sequence, read N- to C-terminus: Galactokinase (387 aa).

Substrate is bound at residue 32–35 (EHTD). ATP is bound by residues Ser66 and 123–129 (GAGLSSS). Residues Ser129 and Glu161 each contribute to the Mg(2+) site. Asp173 acts as the Proton acceptor in catalysis. Residue Tyr223 coordinates substrate.

The protein belongs to the GHMP kinase family. GalK subfamily.

Its subcellular location is the cytoplasm. It carries out the reaction alpha-D-galactose + ATP = alpha-D-galactose 1-phosphate + ADP + H(+). It functions in the pathway carbohydrate metabolism; galactose metabolism. Its function is as follows. Catalyzes the transfer of the gamma-phosphate of ATP to D-galactose to form alpha-D-galactose-1-phosphate (Gal-1-P). This chain is Galactokinase, found in Enterococcus faecalis (strain ATCC 700802 / V583).